We begin with the raw amino-acid sequence, 120 residues long: Flagellar protein FliT (120 aa).

A required for homodimerization region spans residues 1–50 (MTNFIPSLTDWHALHALSITMLDLAHSGKWDELIEQEMNYVQLVEGIARN). The tract at residues 59-97 (LINQAKEILNAVLRNEAELKTLLQHRMEELRQLIDQTGK) is fliD binding.

The protein belongs to the FliT family. Homodimer. Interacts with FliD and FlhC.

It localises to the cytoplasm. The protein localises to the cytosol. In terms of biological role, dual-function protein that regulates the transcription of class 2 flagellar operons and that also acts as an export chaperone for the filament-capping protein FliD. As a transcriptional regulator, acts as an anti-FlhDC factor; it directly binds FlhC, thus inhibiting the binding of the FlhC/FlhD complex to class 2 promoters, resulting in decreased expression of class 2 flagellar operons. As a chaperone, effects FliD transition to the membrane by preventing its premature polymerization, and by directing it to the export apparatus. This Citrobacter koseri (strain ATCC BAA-895 / CDC 4225-83 / SGSC4696) protein is Flagellar protein FliT.